The following is a 186-amino-acid chain: MAKPEKVSAVAEITEQFKGSTAAVITEYRGLTVGNITTLRRALGEGATYSVAKNTLVKRAAAEAGVEGLDDLFVGPTAIAFIKGEPVDAAKALKNFAKDNKALIIKGGYMDGAALSVDEVNKIADLESREILLAKLAGAMKGNLAKAAGLFNAPASQVARLAAALQEKKAAEGGAAEAPAEAAAES.

It belongs to the universal ribosomal protein uL10 family. Part of the ribosomal stalk of the 50S ribosomal subunit. The N-terminus interacts with L11 and the large rRNA to form the base of the stalk. The C-terminus forms an elongated spine to which L12 dimers bind in a sequential fashion forming a multimeric L10(L12)X complex.

In terms of biological role, forms part of the ribosomal stalk, playing a central role in the interaction of the ribosome with GTP-bound translation factors. This chain is Large ribosomal subunit protein uL10, found in Rhodococcus jostii (strain RHA1).